Here is a 449-residue protein sequence, read N- to C-terminus: UDP-N-acetylmuramoylalanine--D-glutamate ligase (449 aa).

Position 118–124 (118–124 (GTNGKTT)) interacts with ATP.

The protein belongs to the MurCDEF family.

Its subcellular location is the cytoplasm. The catalysed reaction is UDP-N-acetyl-alpha-D-muramoyl-L-alanine + D-glutamate + ATP = UDP-N-acetyl-alpha-D-muramoyl-L-alanyl-D-glutamate + ADP + phosphate + H(+). The protein operates within cell wall biogenesis; peptidoglycan biosynthesis. In terms of biological role, cell wall formation. Catalyzes the addition of glutamate to the nucleotide precursor UDP-N-acetylmuramoyl-L-alanine (UMA). This chain is UDP-N-acetylmuramoylalanine--D-glutamate ligase, found in Staphylococcus carnosus (strain TM300).